The sequence spans 120 residues: NAD(P)H-quinone oxidoreductase subunit 3, chloroplastic (120 aa).

A run of 3 helical transmembrane segments spans residues 9–29, 64–84, and 88–108; these read IFWAFLIISSAIPVLAFLISG, MFALVFVVFDVETVFLYPWAM, and VLGVSAFIEAFIFVLILILGL.

Belongs to the complex I subunit 3 family. NDH is composed of at least 16 different subunits, 5 of which are encoded in the nucleus.

The protein localises to the plastid. It localises to the chloroplast thylakoid membrane. The enzyme catalyses a plastoquinone + NADH + (n+1) H(+)(in) = a plastoquinol + NAD(+) + n H(+)(out). It carries out the reaction a plastoquinone + NADPH + (n+1) H(+)(in) = a plastoquinol + NADP(+) + n H(+)(out). NDH shuttles electrons from NAD(P)H:plastoquinone, via FMN and iron-sulfur (Fe-S) centers, to quinones in the photosynthetic chain and possibly in a chloroplast respiratory chain. The immediate electron acceptor for the enzyme in this species is believed to be plastoquinone. Couples the redox reaction to proton translocation, and thus conserves the redox energy in a proton gradient. In Capsella bursa-pastoris (Shepherd's purse), this protein is NAD(P)H-quinone oxidoreductase subunit 3, chloroplastic.